The chain runs to 1065 residues: Cellulose synthase A catalytic subunit 3 [UDP-forming] (1065 aa).

Over 1–260 the chain is Cytoplasmic; that stretch reads MESEGETAGK…PSSRINPYRM (260 aa). Ser-3 carries the post-translational modification Phosphoserine. The Zn(2+) site is built by Cys-20, Cys-23, Cys-39, Cys-42, Cys-47, Cys-50, Cys-62, and Cys-65. The RING-type; degenerate zinc finger occupies 20 to 66; that stretch reads CQICSDNVGKTVDGDRFVACDICSFPVCRPCYEYERKDGNQSCPQCK. Ser-151, Ser-211, and Ser-216 each carry phosphoserine. A helical transmembrane segment spans residues 261–281; sequence VIMLRLVILCLFLHYRITNPV. Topologically, residues 282–283 are extracellular; that stretch reads PN. The helical transmembrane segment at 284 to 304 threads the bilayer; sequence AFALWLVSVICEIWFALSWIL. Residues 305-842 are Cytoplasmic-facing; sequence DQFPKWFPVN…LERFAYVNTT (538 aa). The UDP-alpha-D-glucose site is built by Ser-343, Lys-349, Glu-350, and Asp-379. Asp-379 is an active-site residue. A coiled-coil region spans residues 433 to 457; sequence VKDRRAMKREYEEFKIRINALVSKA. Position 520 (Lys-520) interacts with UDP-alpha-D-glucose. Lys-521 and Asp-545 together coordinate Mn(2+). A disordered region spans residues 643–672; it reads SKLCGGSRKKNSKAKKESDKKKSGRHTDST. Basic and acidic residues predominate over residues 656–670; the sequence is AKKESDKKKSGRHTD. The active site involves Asp-765. The chain crosses the membrane as a helical span at residues 843–863; the sequence is IYPITSIPLLMYCTLPAVCLF. Topologically, residues 864-874 are extracellular; that stretch reads TNQFIIPQISN. The helical transmembrane segment at 875 to 895 threads the bilayer; sequence IASIWFLSLFLSIFATGILEM. Residues 896 to 910 lie on the Cytoplasmic side of the membrane; it reads RWSGVGIDEWWRNEQ. Residues 911 to 931 traverse the membrane as a helical segment; that stretch reads FWVIGGVSAHLFAVFQGILKV. The Extracellular portion of the chain corresponds to 932–961; the sequence is LAGIDTNFTVTSKASDEDGDFAELYLFKWT. The N-linked (GlcNAc...) asparagine glycan is linked to Asn-938. Residues 962-982 form a helical membrane-spanning segment; the sequence is TLLIPPTTLLIVNLVGVVAGV. The Cytoplasmic segment spans residues 983 to 993; the sequence is SYAINSGYQSW. A helical membrane pass occupies residues 994 to 1014; the sequence is GPLFGKLFFAFWVIVHLYPFL. Residues 1015–1023 are Extracellular-facing; the sequence is KGLMGRQNR. A helical membrane pass occupies residues 1024–1044; sequence TPTIVVVWSVLLASIFSLLWV. The Cytoplasmic segment spans residues 1045–1065; the sequence is RIDPFTSRVTGPDILECGINC.

This sequence belongs to the glycosyltransferase 2 family. Plant cellulose synthase subfamily. Homodimer. Interacts with CESA1 and CESA6. Interacts with STL1 and STL2, but not with GOT1. Binds to CSI1 and CSI3. Interacts with PAT24/TIP1. Zn(2+) is required as a cofactor. Mn(2+) serves as cofactor. Palmitoylated, in part by PAT24/TIP1. As to expression, expressed in young plants, flowers and roots, and to a lower extent in leaves and stems. Localized in all cells except meristematic cells. Accumulates particularly in root caps, root hairs, epidermal layer, midveins of leaves and anthers. Not present in old tissues.

The protein resides in the cell membrane. It is found in the golgi apparatus membrane. The enzyme catalyses [(1-&gt;4)-beta-D-glucosyl](n) + UDP-alpha-D-glucose = [(1-&gt;4)-beta-D-glucosyl](n+1) + UDP + H(+). The protein operates within glycan metabolism; plant cellulose biosynthesis. Its function is as follows. Catalytic subunit of cellulose synthase terminal complexes ('rosettes'), required for beta-1,4-glucan microfibril crystallization, a major mechanism of the cell wall formation. Involved in the primary cell wall formation, especially in roots. The polypeptide is Cellulose synthase A catalytic subunit 3 [UDP-forming] (Arabidopsis thaliana (Mouse-ear cress)).